The following is a 283-amino-acid chain: Elongation factor Ts (283 aa).

The involved in Mg(2+) ion dislocation from EF-Tu stretch occupies residues 80-83 (TDFV).

The protein belongs to the EF-Ts family.

Its subcellular location is the cytoplasm. In terms of biological role, associates with the EF-Tu.GDP complex and induces the exchange of GDP to GTP. It remains bound to the aminoacyl-tRNA.EF-Tu.GTP complex up to the GTP hydrolysis stage on the ribosome. This Haemophilus influenzae (strain PittEE) protein is Elongation factor Ts.